A 478-amino-acid chain; its full sequence is UBP1-associated protein 2A (478 aa).

The tract at residues 1-99 is disordered; it reads MTKKRKLEGE…NQEDDDDEPI (99 aa). Residues 41-75 are compositionally biased toward acidic residues; that stretch reads GDVEEVEYEEVEEEQEEEVEDDDDEDDGDENEDQT. RRM domains are found at residues 140–217 and 245–328; these read RKIF…LASK and KKIY…KPGK. 2 disordered regions span residues 321–359 and 442–478; these read IDGP…GGHG and GTQP…YMGH. Positions 442–456 are enriched in low complexity; sequence GTQPGLQGGYQTPQP. The segment covering 457 to 470 has biased composition (gly residues); sequence GQGGTSRGQHGVGP.

As to quaternary structure, interacts with UBA1A, UBA2A, UBP1A, UBP1B, UBP1C and SRK2E. In terms of tissue distribution, expressed in young leaves, flowers and embryos.

Its subcellular location is the nucleus. Functionally, heterogeneous nuclear ribonucleoprotein (hnRNP)-like protein that acts as a component of a complex regulating the turnover of mRNAs in the nucleus. Binds with high affinity to RNA molecules that contain U-rich sequences in 3'-UTRs. May function in complex with UBP1 and contribute to the stabilization of mRNAs in the nucleus. However, unlike UBP1, UBA2A does not stimulate pre-mRNA splicing. The polypeptide is UBP1-associated protein 2A (UBA2A) (Arabidopsis thaliana (Mouse-ear cress)).